The primary structure comprises 380 residues: MASLRKTHPLLKIANHALVDLPAPSNISVWWNFGSLLGLCLISQILTGLFLAMHYTSDIATAFSSVAHICRDVNYGWLIRNLHANGASFFFICIYLHIGRGLYYGSYLYKETWNIGVVLLLLVMATAFVGYVLPWGQMSFWGATVITNLLSAVPYVGGTLVQWIWGGFSVDNATLTRFFAFHFLLPFIVAAMTMLHLLFLHETGSNNPLGLNSDTDKISFHPYFSYKDLLGFAAVIILLTCLALFTPNLLGDPDNFTPANPLVTPPHIKPEWYFLFAYAILRSIPNKLGGVLALLASILVLMVVPILHTSKQRSLTFRPVTQFLFWALIANVAILTWIGGMPVEDPYIIIGQIASLTYFALFLLIMPMAALVENKVLGWQ.

4 helical membrane-spanning segments follow: residues 33-53, 77-98, 113-133, and 178-198; these read FGSLLGLCLISQILTGLFLAM, WLIRNLHANGASFFFICIYLHI, WNIGVVLLLLVMATAFVGYVL, and FFAFHFLLPFIVAAMTMLHLL. Positions 83 and 97 each coordinate heme b. His-182 and His-196 together coordinate heme b. His-201 contacts a ubiquinone. The next 4 membrane-spanning stretches (helical) occupy residues 226 to 246, 288 to 308, 320 to 340, and 347 to 367; these read YKDLLGFAAVIILLTCLALFT, LGGVLALLASILVLMVVPILH, VTQFLFWALIANVAILTWIGG, and YIIIGQIASLTYFALFLLIMP.

The protein belongs to the cytochrome b family. In terms of assembly, the cytochrome bc1 complex contains 3 respiratory subunits (MT-CYB, CYC1 and UQCRFS1), 2 core proteins (UQCRC1 and UQCRC2) and probably 6 low-molecular weight proteins. The cofactor is heme b.

Its subcellular location is the mitochondrion inner membrane. Functionally, component of the ubiquinol-cytochrome c reductase complex (complex III or cytochrome b-c1 complex) that is part of the mitochondrial respiratory chain. The b-c1 complex mediates electron transfer from ubiquinol to cytochrome c. Contributes to the generation of a proton gradient across the mitochondrial membrane that is then used for ATP synthesis. This Pagrus major (Red sea bream) protein is Cytochrome b (mt-cyb).